The sequence spans 356 residues: DNA polymerase IV (356 aa).

The UmuC domain occupies 4–185; the sequence is IIHIDMDCYY…LALGKIPGVG (182 aa). Positions 8 and 103 each coordinate Mg(2+). Glu104 is a catalytic residue.

The protein belongs to the DNA polymerase type-Y family. In terms of assembly, monomer. Requires Mg(2+) as cofactor.

It is found in the cytoplasm. It catalyses the reaction DNA(n) + a 2'-deoxyribonucleoside 5'-triphosphate = DNA(n+1) + diphosphate. Its function is as follows. Poorly processive, error-prone DNA polymerase involved in untargeted mutagenesis. Copies undamaged DNA at stalled replication forks, which arise in vivo from mismatched or misaligned primer ends. These misaligned primers can be extended by PolIV. Exhibits no 3'-5' exonuclease (proofreading) activity. May be involved in translesional synthesis, in conjunction with the beta clamp from PolIII. The sequence is that of DNA polymerase IV from Pseudoalteromonas atlantica (strain T6c / ATCC BAA-1087).